A 261-amino-acid chain; its full sequence is MLICNDKFNPKTLLEEIMALRPWRKGPFKISQIKIDSEWDSSIKWDLVKNATPLKDKIVADVGCNNGYYLFKMLEYKPKSLVGFDPGVLVKKQFEFLAPFFDKEKKIIYESLGVEDLHEKYPNAFDVIFCLGVLYHRKSPLEALKALYHALKIKGELVLDTLIIDSPLDIALCPKKTYAKMKNVYFIPSVSVLKGWCERVGFENFEILSVLKTTPKEQRKTDFILGQSLEDFLDKTDPSKTLEGYDAPLRGYFKMLKPSKR.

Residues Lys-25, Trp-39, Lys-44, Gly-63, 114–115, Tyr-135, and Arg-250 each bind carboxy-S-adenosyl-L-methionine; that span reads VE.

It belongs to the class I-like SAM-binding methyltransferase superfamily. CmoB family. In terms of assembly, homotetramer.

It carries out the reaction carboxy-S-adenosyl-L-methionine + 5-hydroxyuridine(34) in tRNA = 5-carboxymethoxyuridine(34) in tRNA + S-adenosyl-L-homocysteine + H(+). Functionally, catalyzes carboxymethyl transfer from carboxy-S-adenosyl-L-methionine (Cx-SAM) to 5-hydroxyuridine (ho5U) to form 5-carboxymethoxyuridine (cmo5U) at position 34 in tRNAs. The sequence is that of tRNA U34 carboxymethyltransferase from Helicobacter pylori (strain P12).